The sequence spans 47 residues: Large ribosomal subunit protein bL33C (47 aa).

It belongs to the bacterial ribosomal protein bL33 family.

This Staphylococcus epidermidis (strain ATCC 35984 / DSM 28319 / BCRC 17069 / CCUG 31568 / BM 3577 / RP62A) protein is Large ribosomal subunit protein bL33C.